The primary structure comprises 345 residues: RDS/peripherin-like protein xRDS36 (345 aa).

Residues 1–24 lie on the Cytoplasmic side of the membrane; that stretch reads MVLFKAKFSFQRRVKLAQTLWLLS. A helical membrane pass occupies residues 25–43; that stretch reads WLSVLVGCLTFGMGIFLKV. Residues 44–61 are Lumenal-facing; sequence QLWIHNEVMDNTTAHAVP. Asn-54 carries N-linked (GlcNAc...) asparagine glycosylation. Residues 62-80 form a helical membrane-spanning segment; sequence NTVITAGLVGILLGYFAGK. Residues 81 to 99 are Cytoplasmic-facing; it reads ISQASMDLTKYQRWKSFMM. The chain crosses the membrane as a helical span at residues 100–123; it reads PFFFLAILSCIVCLAALVLSVALR. At 124–264 the chain is on the lumenal side; it reads GTLEESLKIG…LGYYTGIMAT (141 aa). Asn-229 carries an N-linked (GlcNAc...) asparagine glycan. The helical transmembrane segment at 265-290 threads the bilayer; it reads NGAAVTLSFLLQASVLVSLRYVQTSM. Over 291-345 the chain is Cytoplasmic; sequence DKIRDPDDVEADTEGFLLEKGVMETVNSSLEKIKDLFKSNQVETAEGGGEGAAGS.

It belongs to the PRPH2/ROM1 family. Homodimer; disulfide-linked. In terms of tissue distribution, rod specific.

Its subcellular location is the membrane. The polypeptide is RDS/peripherin-like protein xRDS36 (rds36) (Xenopus laevis (African clawed frog)).